The chain runs to 168 residues: Photosystem I assembly protein Ycf3 (168 aa).

TPR repeat units follow at residues 35-68 (AFTY…EIDP), 72-105 (SYIL…NPFL), and 120-153 (GEQA…TPGN).

The protein belongs to the Ycf3 family.

Its subcellular location is the plastid. The protein localises to the chloroplast thylakoid membrane. Essential for the assembly of the photosystem I (PSI) complex. May act as a chaperone-like factor to guide the assembly of the PSI subunits. The protein is Photosystem I assembly protein Ycf3 of Ipomoea purpurea (Common morning glory).